Reading from the N-terminus, the 162-residue chain is Dihydrofolate reductase (162 aa).

One can recognise a DHFR domain in the interval 3 to 161; that stretch reads KITLIAACAE…TSYAFVHYLR (159 aa). Residue 7–9 participates in substrate binding; the sequence is IAA. Residues 8–9 and 16–21 each bind NADP(+); these read AA and IGAGNA. Substrate is bound at residue Asp29. Position 45 to 48 (45 to 48) interacts with NADP(+); that stretch reads GRKT. Arg60 contributes to the substrate binding site. Residues 65-68 and 98-103 contribute to the NADP(+) site; these read ISRQ and MGGAQI. Residue Thr117 participates in substrate binding.

The protein belongs to the dihydrofolate reductase family.

It catalyses the reaction (6S)-5,6,7,8-tetrahydrofolate + NADP(+) = 7,8-dihydrofolate + NADPH + H(+). It participates in cofactor biosynthesis; tetrahydrofolate biosynthesis; 5,6,7,8-tetrahydrofolate from 7,8-dihydrofolate: step 1/1. In terms of biological role, key enzyme in folate metabolism. Catalyzes an essential reaction for de novo glycine and purine synthesis, and for DNA precursor synthesis. The polypeptide is Dihydrofolate reductase (folA) (Neisseria meningitidis serogroup A / serotype 4A (strain DSM 15465 / Z2491)).